The following is a 240-amino-acid chain: Large ribosomal subunit protein bL25 (240 aa).

Disordered regions lie at residues 1 to 20 (MAEN…GPAR) and 220 to 240 (PAAG…KGKK). A compositionally biased stretch (low complexity) spans 220 to 229 (PAAGAAPAKG). The segment covering 230 to 240 (GEAKGGDKGKK) has biased composition (basic and acidic residues).

This sequence belongs to the bacterial ribosomal protein bL25 family. CTC subfamily. Part of the 50S ribosomal subunit; part of the 5S rRNA/L5/L18/L25 subcomplex. Contacts the 5S rRNA. Binds to the 5S rRNA independently of L5 and L18.

Its function is as follows. This is one of the proteins that binds to the 5S RNA in the ribosome where it forms part of the central protuberance. The protein is Large ribosomal subunit protein bL25 of Anaeromyxobacter dehalogenans (strain 2CP-C).